We begin with the raw amino-acid sequence, 241 residues long: Adenosylcobinamide-GDP ribazoletransferase (241 aa).

A run of 4 helical transmembrane segments spans residues 34–54 (LGLP…AWAF), 108–128 (VGGL…FGWI), 184–206 (LPFS…WTCL), and 220–240 (FLGA…SSLP).

The protein belongs to the CobS family. Requires Mg(2+) as cofactor.

The protein resides in the cell membrane. The enzyme catalyses alpha-ribazole + adenosylcob(III)inamide-GDP = adenosylcob(III)alamin + GMP + H(+). It carries out the reaction alpha-ribazole 5'-phosphate + adenosylcob(III)inamide-GDP = adenosylcob(III)alamin 5'-phosphate + GMP + H(+). It participates in cofactor biosynthesis; adenosylcobalamin biosynthesis; adenosylcobalamin from cob(II)yrinate a,c-diamide: step 7/7. In terms of biological role, joins adenosylcobinamide-GDP and alpha-ribazole to generate adenosylcobalamin (Ado-cobalamin). Also synthesizes adenosylcobalamin 5'-phosphate from adenosylcobinamide-GDP and alpha-ribazole 5'-phosphate. The polypeptide is Adenosylcobinamide-GDP ribazoletransferase (Methanopyrus kandleri (strain AV19 / DSM 6324 / JCM 9639 / NBRC 100938)).